A 369-amino-acid chain; its full sequence is 3-methylarginine biosynthesis aminotransferase ArgM (369 aa).

Position 216 is an N6-(pyridoxal phosphate)lysine (lysine 216).

The protein belongs to the class-I pyridoxal-phosphate-dependent aminotransferase family. It depends on pyridoxal 5'-phosphate as a cofactor.

It catalyses the reaction L-arginine + 2-oxoglutarate = 5-guanidino-2-oxopentanoate + L-glutamate. The enzyme catalyses (3R)-5-guanidino-3-methyl-2-oxopentanoate + L-aspartate = (3R)-3-methyl-L-arginine + oxaloacetate. It functions in the pathway antibiotic biosynthesis. Aminotransferase involved in the formation of the rare amino acid 3-methylarginine (MeArg), which is incorporated into the peptidyl nucleoside antibiotic arginomycin. Catalyzes two rounds of transamination: the transfer of the amino group from L-arginine to 2-oxoglutarate to give glutamate and 5-guanidino-2-oxopentanoic acid, which will be methylated by ArgN. Then, ArgM specifically catalyzes transamination from the donor L-aspartate to the 5-guanidino-3-methyl-2-oxopentanoic acid produced by ArgN, generating the final product, 3-methylarginine. Cannot use arginine analogs, such as D-arginine, L-homoarginine and N-methylarginine for the first transamination. The chain is 3-methylarginine biosynthesis aminotransferase ArgM from Streptomyces arginensis.